A 344-amino-acid chain; its full sequence is Anthranilate phosphoribosyltransferase (344 aa).

5-phospho-alpha-D-ribose 1-diphosphate-binding positions include Gly81, 84–85 (GD), Ser89, 91–94 (NIST), 109–117 (KHGNRALSS), and Ala121. Gly81 contacts anthranilate. A Mg(2+)-binding site is contributed by Ser93. Asn112 lines the anthranilate pocket. Arg167 is an anthranilate binding site. Asp226 and Glu227 together coordinate Mg(2+).

Belongs to the anthranilate phosphoribosyltransferase family. Homodimer. Mg(2+) serves as cofactor.

It carries out the reaction N-(5-phospho-beta-D-ribosyl)anthranilate + diphosphate = 5-phospho-alpha-D-ribose 1-diphosphate + anthranilate. Its pathway is amino-acid biosynthesis; L-tryptophan biosynthesis; L-tryptophan from chorismate: step 2/5. Functionally, catalyzes the transfer of the phosphoribosyl group of 5-phosphorylribose-1-pyrophosphate (PRPP) to anthranilate to yield N-(5'-phosphoribosyl)-anthranilate (PRA). The polypeptide is Anthranilate phosphoribosyltransferase (Azorhizobium caulinodans (strain ATCC 43989 / DSM 5975 / JCM 20966 / LMG 6465 / NBRC 14845 / NCIMB 13405 / ORS 571)).